Consider the following 566-residue polypeptide: Tissue-type plasminogen activator (566 aa).

An N-terminal signal peptide occupies residues 1–21 (MMSAMKTEFLCVLLLCGAVFT). A propeptide spanning residues 22-33 (SPSQETYRRLRR) is cleaved from the precursor. The propeptide at 34-36 (GAR) is removed by plasmin. Residues 40–82 (VTCRDGKTQMTYRQHDSWLRPLLRGNQVEHCWCDGGRAQCHSV) form the Fibronectin type-I domain. 17 disulfide bridges follow: cysteine 42-cysteine 72, cysteine 70-cysteine 79, cysteine 87-cysteine 98, cysteine 92-cysteine 109, cysteine 111-cysteine 120, cysteine 128-cysteine 209, cysteine 149-cysteine 191, cysteine 180-cysteine 204, cysteine 219-cysteine 300, cysteine 240-cysteine 282, cysteine 271-cysteine 295, cysteine 303-cysteine 434, cysteine 346-cysteine 362, cysteine 354-cysteine 423, cysteine 448-cysteine 523, cysteine 480-cysteine 496, and cysteine 513-cysteine 541. Residues 43 to 53 (RDGKTQMTYRQ) form an important for binding to annexin A2 region. One can recognise an EGF-like domain in the interval 83–121 (PVRSCSEPWCFNGGTCRQALYSSDFVCQCPEGFMGKLCE). Kringle domains are found at residues 128–209 (CYKD…TPAC) and 219–300 (CYTG…VPQC). The N-linked (GlcNAc...) asparagine glycan is linked to asparagine 153. Residues 315 to 565 (IKGGLFADIT…YLDWIRDNTR (251 aa)) enclose the Peptidase S1 domain. Catalysis depends on charge relay system residues histidine 361 and aspartate 410. Asparagine 487 carries N-linked (GlcNAc...) asparagine glycosylation. Residue serine 517 is the Charge relay system of the active site.

Belongs to the peptidase S1 family. As to quaternary structure, heterodimer of chain A and chain B held by a disulfide bond. Binds to fibrin with high affinity. This interaction leads to an increase in the catalytic efficiency of the enzyme due to an increase in affinity for plasminogen. Similarly, binding to heparin increases the activation of plasminogen. Binds to annexin A2, cytokeratin-8, fibronectin and laminin. Binds to mannose receptor and the low-density lipoprotein receptor-related protein (LRP1); these proteins are involved in TPA clearance. Binds LRP1B; binding is followed by internalization and degradation. Forms heterodimer with SERPINA5. Interacts with SERPINE1. In complex with SERPINE1, interacts with SORL1. Post-translationally, the single chain, almost fully active enzyme, can be further processed into a two-chain fully active form by a cleavage after Arg-314 catalyzed by plasmin, tissue kallikrein or factor Xa.

Its subcellular location is the secreted. It localises to the extracellular space. The enzyme catalyses Specific cleavage of Arg-|-Val bond in plasminogen to form plasmin.. With respect to regulation, inhibited by SERPINA5. Inhibited by SERPINE1. Functionally, converts the abundant, but inactive, zymogen plasminogen to plasmin by hydrolyzing a single Arg-Val bond in plasminogen. By controlling plasmin-mediated proteolysis, it plays an important role in tissue remodeling and degradation, in cell migration and many other physiopathological events. During oocyte activation, plays a role in cortical granule reaction in the zona reaction, which contributes to the block to polyspermy. The sequence is that of Tissue-type plasminogen activator (PLAT) from Bos taurus (Bovine).